The sequence spans 275 residues: 2,3,4,5-tetrahydropyridine-2,6-dicarboxylate N-succinyltransferase (275 aa).

It belongs to the transferase hexapeptide repeat family.

Its subcellular location is the cytoplasm. The enzyme catalyses (S)-2,3,4,5-tetrahydrodipicolinate + succinyl-CoA + H2O = (S)-2-succinylamino-6-oxoheptanedioate + CoA. It participates in amino-acid biosynthesis; L-lysine biosynthesis via DAP pathway; LL-2,6-diaminopimelate from (S)-tetrahydrodipicolinate (succinylase route): step 1/3. The protein is 2,3,4,5-tetrahydropyridine-2,6-dicarboxylate N-succinyltransferase of Burkholderia ambifaria (strain MC40-6).